The primary structure comprises 509 residues: Cobyric acid synthase (509 aa).

Residues 262-459 (ELKVGIIKLP…IHGIFENDDW (198 aa)) enclose the GATase cobBQ-type domain. Cys-343 acts as the Nucleophile in catalysis. His-451 is a catalytic residue.

This sequence belongs to the CobB/CobQ family. CobQ subfamily.

It participates in cofactor biosynthesis; adenosylcobalamin biosynthesis. Catalyzes amidations at positions B, D, E, and G on adenosylcobyrinic A,C-diamide. NH(2) groups are provided by glutamine, and one molecule of ATP is hydrogenolyzed for each amidation. The polypeptide is Cobyric acid synthase (Prochlorococcus marinus subsp. pastoris (strain CCMP1986 / NIES-2087 / MED4)).